The chain runs to 898 residues: Protein kintoun (898 aa).

Disordered stretches follow at residues 558–680 (GELK…VESD) and 765–822 (ILGQ…SGIS). Residues 575 to 602 (INTRTVEDDTKVAKENVKKVDQETAHEG) show a composition bias toward basic and acidic residues. Residues 603–616 (KKSKKNQRRKNKKR) are compositionally biased toward basic residues. The segment covering 641-656 (NEANSFEGTGSSSEAT) has biased composition (polar residues).

This sequence belongs to the PIH1 family. Kintoun subfamily.

The protein localises to the cytoplasm. Its function is as follows. Required for cytoplasmic pre-assembly of axonemal dyneins, thereby playing a central role in motility in cilia and flagella. Involved in pre-assembly of dynein arm complexes in the cytoplasm before intraflagellar transport loads them for the ciliary compartment. The sequence is that of Protein kintoun from Aedes aegypti (Yellowfever mosquito).